Reading from the N-terminus, the 166-residue chain is Cofilin-2 (166 aa).

The ADF-H domain occupies 4–153 (GVTVNDEVIK…KDRSTLGEKL (150 aa)). Position 24 is a phosphoserine (S24). The Nuclear localization signal signature appears at 30 to 34 (KKRKK).

It belongs to the actin-binding proteins ADF family. In terms of processing, the phosphorylation of Ser-24 may prevent recognition of the nuclear localization signal. Widely distributed in various tissues.

It localises to the nucleus matrix. The protein resides in the cytoplasm. The protein localises to the cytoskeleton. Functionally, controls reversibly actin polymerization and depolymerization in a pH-sensitive manner. It has the ability to bind G- and F-actin in a 1:1 ratio of cofilin to actin. It is the major component of intranuclear and cytoplasmic actin rods. The polypeptide is Cofilin-2 (CFL2) (Gallus gallus (Chicken)).